We begin with the raw amino-acid sequence, 372 residues long: uncharacterized protein (372 aa).

An N-terminal signal peptide occupies residues 1 to 33 (MVRRALRLAAGTASLAAGTWLLRALHGTPAALG).

To K.pneumoniae RomA.

This is an uncharacterized protein from Mycobacterium bovis (strain ATCC BAA-935 / AF2122/97).